The chain runs to 154 residues: Large ribosomal subunit protein uL30 (154 aa).

The tract at residues 114 to 146 (PTLRLHPPRGGHDGVKHPVKEGGQLGKHDTEGI) is disordered. Basic and acidic residues predominate over residues 123–144 (GGHDGVKHPVKEGGQLGKHDTE).

The protein belongs to the universal ribosomal protein uL30 family. As to quaternary structure, part of the 50S ribosomal subunit. Binds 5S rRNA.

This is one of 5 proteins that mediate the attachment of the 5S rRNA onto the large ribosomal subunit, stabilizing the orientation of adjacent RNA domains. In Haloarcula marismortui (strain ATCC 43049 / DSM 3752 / JCM 8966 / VKM B-1809) (Halobacterium marismortui), this protein is Large ribosomal subunit protein uL30.